Consider the following 197-residue polypeptide: Mediator of RNA polymerase II transcription subunit 10 (197 aa).

The interval 1 to 39 is disordered; the sequence is MSSTAGTRRPRQITPTSPSPSPEPQPGATNGSSSTINVA. Polar residues predominate over residues 27–37; the sequence is GATNGSSSTIN.

It belongs to the Mediator complex subunit 10 family. As to quaternary structure, component of the Mediator complex.

The protein resides in the nucleus. Component of the Mediator complex, a coactivator involved in the regulated transcription of nearly all RNA polymerase II-dependent genes. Mediator functions as a bridge to convey information from gene-specific regulatory proteins to the basal RNA polymerase II transcription machinery. Mediator is recruited to promoters by direct interactions with regulatory proteins and serves as a scaffold for the assembly of a functional preinitiation complex with RNA polymerase II and the general transcription factors. This is Mediator of RNA polymerase II transcription subunit 10 (NUT2) from Mycosarcoma maydis (Corn smut fungus).